The following is a 158-amino-acid chain: Cyclic pyranopterin monophosphate synthase (158 aa).

Substrate-binding positions include 75–77 (LCH) and 113–114 (ME). The active site involves aspartate 128.

The protein belongs to the MoaC family. In terms of assembly, homohexamer; trimer of dimers.

It carries out the reaction (8S)-3',8-cyclo-7,8-dihydroguanosine 5'-triphosphate = cyclic pyranopterin phosphate + diphosphate. Its pathway is cofactor biosynthesis; molybdopterin biosynthesis. In terms of biological role, catalyzes the conversion of (8S)-3',8-cyclo-7,8-dihydroguanosine 5'-triphosphate to cyclic pyranopterin monophosphate (cPMP). The protein is Cyclic pyranopterin monophosphate synthase of Histophilus somni (strain 2336) (Haemophilus somnus).